We begin with the raw amino-acid sequence, 338 residues long: Anthranilate phosphoribosyltransferase (338 aa).

5-phospho-alpha-D-ribose 1-diphosphate is bound by residues glycine 78, 81 to 82, serine 86, 88 to 91, 106 to 114, and serine 118; these read GD, NIST, and KHGNKSVTS. Anthranilate is bound at residue glycine 78. Serine 90 contacts Mg(2+). Residue asparagine 109 coordinates anthranilate. An anthranilate-binding site is contributed by arginine 163. Aspartate 222 and glutamate 223 together coordinate Mg(2+).

It belongs to the anthranilate phosphoribosyltransferase family. In terms of assembly, homodimer. Requires Mg(2+) as cofactor.

The catalysed reaction is N-(5-phospho-beta-D-ribosyl)anthranilate + diphosphate = 5-phospho-alpha-D-ribose 1-diphosphate + anthranilate. The protein operates within amino-acid biosynthesis; L-tryptophan biosynthesis; L-tryptophan from chorismate: step 2/5. Its function is as follows. Catalyzes the transfer of the phosphoribosyl group of 5-phosphorylribose-1-pyrophosphate (PRPP) to anthranilate to yield N-(5'-phosphoribosyl)-anthranilate (PRA). In Staphylococcus saprophyticus subsp. saprophyticus (strain ATCC 15305 / DSM 20229 / NCIMB 8711 / NCTC 7292 / S-41), this protein is Anthranilate phosphoribosyltransferase.